The chain runs to 777 residues: Zinc finger FYVE domain-containing protein 1 (777 aa).

Residues 416-777 are required for localization in the lipid droplets; the sequence is MAHSSFFPDE…FNCNKKPGDL (362 aa). 2 consecutive FYVE-type zinc fingers follow at residues 598-659 and 715-775; these read NSQI…EARN and DHEI…KKPG. Zn(2+) contacts are provided by Cys-604, Cys-607, Cys-620, Cys-623, Cys-628, Cys-631, Cys-651, Cys-654, Cys-721, Cys-724, Cys-737, Cys-740, Cys-745, Cys-748, Cys-767, and Cys-770.

In terms of assembly, interacts with RAB18 (in GTP-bound form). Interacts with BSCL2 in a RAB18-dependent manner. Interacts with ZW10. (Microbial infection) Interacts with SARS coronavirus-2/SARS-CoV-2 non-structural protein 6 (nsp6); the interaction is independent of PtdIns3P-binding and leads to endoplasmic reticulum (ER) and double membrane vesicles (DMVs) binding to lipid droplets. Highly expressed in heart. Also detected in the testis. In terms of tissue distribution, expressed in all tissues examined, including, brain, placenta, lung, liver, skeletal muscle, pancreas and kidney. Highly expressed in heart.

It is found in the golgi apparatus. It localises to the golgi stack. The protein resides in the endoplasmic reticulum. Its subcellular location is the lipid droplet. The protein localises to the preautophagosomal structure. It is found in the mitochondrion. Plays a role in the formation of lipid droplets (LDs) which are storage organelles at the center of lipid and energy homeostasis. Regulates the morphology, size and distribution of LDs. Mediates the formation of endoplasmic reticulum-lipid droplets (ER-LD) contacts by forming a complex with RAB18 and ZW10. Binds to phosphatidylinositol 3-phosphate (PtdIns3P) through FYVE-type zinc finger. In terms of biological role, (Microbial infection) Upon SARS coronavirus-2/SARS-CoV-2 infection, mediates through binding with non-structural protein 6 (nsp6) the replication organelle-lipid droplet association required to sustain viral replication. The protein is Zinc finger FYVE domain-containing protein 1 (ZFYVE1) of Homo sapiens (Human).